A 504-amino-acid chain; its full sequence is Anaerobic nitric oxide reductase transcription regulator NorR (504 aa).

Asp-57 carries the 4-aspartylphosphate modification. The 230-residue stretch at 187–416 (MIGLSPGMTQ…LEHAIHRAVV (230 aa)) folds into the Sigma-54 factor interaction domain. ATP contacts are provided by residues 215–222 (GETGTGKE) and 278–287 (ADNGTLFLDE). A DNA-binding region (H-T-H motif) is located at residues 479 to 498 (WAACARMLETDVANLHRLAK).

It functions in the pathway nitrogen metabolism; nitric oxide reduction. In terms of biological role, required for the expression of anaerobic nitric oxide (NO) reductase, acts as a transcriptional activator for at least the norVW operon. Activation also requires sigma-54. The sequence is that of Anaerobic nitric oxide reductase transcription regulator NorR from Escherichia coli O139:H28 (strain E24377A / ETEC).